A 741-amino-acid chain; its full sequence is Ribosome-releasing factor 2, mitochondrial (741 aa).

Residues 1–29 (MLKYEFLHGLQKRSHYLRQLSGQFFSRSY) constitute a mitochondrion transit peptide. The tr-type G domain maps to 31-310 (SKIRNIGILA…AVNSYLPAPE (280 aa)). GTP is bound by residues 40-47 (AHIDAGKT), 104-108 (DTPGH), and 158-161 (NKMD).

It belongs to the TRAFAC class translation factor GTPase superfamily. Classic translation factor GTPase family. EF-G/EF-2 subfamily.

Its subcellular location is the mitochondrion. In terms of biological role, mitochondrial GTPase that mediates the disassembly of ribosomes from messenger RNA at the termination of mitochondrial protein biosynthesis. Not involved in the GTP-dependent ribosomal translocation step during translation elongation. This is Ribosome-releasing factor 2, mitochondrial from Drosophila ananassae (Fruit fly).